Reading from the N-terminus, the 445-residue chain is Exodeoxyribonuclease 7 large subunit (445 aa).

This sequence belongs to the XseA family. In terms of assembly, heterooligomer composed of large and small subunits.

The protein localises to the cytoplasm. It catalyses the reaction Exonucleolytic cleavage in either 5'- to 3'- or 3'- to 5'-direction to yield nucleoside 5'-phosphates.. Bidirectionally degrades single-stranded DNA into large acid-insoluble oligonucleotides, which are then degraded further into small acid-soluble oligonucleotides. The sequence is that of Exodeoxyribonuclease 7 large subunit from Geotalea daltonii (strain DSM 22248 / JCM 15807 / FRC-32) (Geobacter daltonii).